A 384-amino-acid chain; its full sequence is Shufflon-specific DNA recombinase (384 aa).

The 88-residue stretch at 9–96 (MSLSRALDKY…LLSSLFNIAR (88 aa)) folds into the Core-binding (CB) domain. The Tyr recombinase domain maps to 118 to 284 (GRDRRLTSSE…RAWQLVSKLD (167 aa)). Residues Arg-155, Lys-180, His-235, Arg-238, and His-262 contribute to the active site. Tyr-271 (O-(3'-phospho-DNA)-tyrosine intermediate) is an active-site residue.

It belongs to the 'phage' integrase family.

Functionally, shufflon-specific DNA recombinase. In Escherichia coli, this protein is Shufflon-specific DNA recombinase (rci).